A 378-amino-acid chain; its full sequence is UPF0754 membrane protein BCAH820_0954 (378 aa).

The next 2 helical transmembrane spans lie at 1-21 (MNIW…GGFT) and 357-377 (YLGA…LLFL).

It belongs to the UPF0754 family.

The protein resides in the cell membrane. This chain is UPF0754 membrane protein BCAH820_0954, found in Bacillus cereus (strain AH820).